Here is a 22-residue protein sequence, read N- to C-terminus: Phospholipase A2 (22 aa).

The protein belongs to the phospholipase A2 family. Group II subfamily. It depends on Ca(2+) as a cofactor. In terms of processing, seven disulfide bonds are present. In terms of tissue distribution, expressed by the venom gland.

The protein resides in the secreted. It carries out the reaction a 1,2-diacyl-sn-glycero-3-phosphocholine + H2O = a 1-acyl-sn-glycero-3-phosphocholine + a fatty acid + H(+). In terms of biological role, snake venom phospholipase A2 (PLA2) that inhibits neuromuscular transmission by blocking acetylcholine release from the nerve termini. PLA2 catalyzes the calcium-dependent hydrolysis of the 2-acyl groups in 3-sn-phosphoglycerides. This is Phospholipase A2 from Daboia siamensis (Eastern Russel's viper).